Reading from the N-terminus, the 452-residue chain is Pup--protein ligase (452 aa).

Glu-9 provides a ligand contact to Mg(2+). Arg-53 contacts ATP. Residue Tyr-55 participates in Mg(2+) binding. Residue Asp-57 is the Proton acceptor of the active site. A Mg(2+)-binding site is contributed by Glu-63. Residues Thr-66 and Trp-419 each coordinate ATP.

This sequence belongs to the Pup ligase/Pup deamidase family. Pup-conjugating enzyme subfamily.

The catalysed reaction is ATP + [prokaryotic ubiquitin-like protein]-L-glutamate + [protein]-L-lysine = ADP + phosphate + N(6)-([prokaryotic ubiquitin-like protein]-gamma-L-glutamyl)-[protein]-L-lysine.. Its pathway is protein degradation; proteasomal Pup-dependent pathway. It participates in protein modification; protein pupylation. Its function is as follows. Catalyzes the covalent attachment of the prokaryotic ubiquitin-like protein modifier Pup to the proteasomal substrate proteins, thereby targeting them for proteasomal degradation. This tagging system is termed pupylation. The ligation reaction involves the side-chain carboxylate of the C-terminal glutamate of Pup and the side-chain amino group of a substrate lysine. The chain is Pup--protein ligase from Mycobacterium leprae (strain Br4923).